Reading from the N-terminus, the 169-residue chain is Thaumatin-like pathogenesis-related protein 4 (169 aa).

The N-terminal stretch at 1–21 is a signal peptide; sequence MATSSTVLFLLLAVFAASASA.

It belongs to the thaumatin family.

Associated with resistance against stem rust fungi. The chain is Thaumatin-like pathogenesis-related protein 4 (RASTL-4) from Avena sativa (Oat).